The sequence spans 657 residues: Glycogen debranching enzyme (657 aa).

D336 (nucleophile) is an active-site residue. The active-site Proton donor is the E371. The segment at A460–K479 is disordered.

It belongs to the glycosyl hydrolase 13 family.

It carries out the reaction Hydrolysis of (1-&gt;6)-alpha-D-glucosidic linkages to branches with degrees of polymerization of three or four glucose residues in limit dextrin.. Its pathway is glycan degradation; glycogen degradation. Its function is as follows. Removes maltotriose and maltotetraose chains that are attached by 1,6-alpha-linkage to the limit dextrin main chain, generating a debranched limit dextrin. This chain is Glycogen debranching enzyme, found in Shigella flexneri serotype 5b (strain 8401).